Reading from the N-terminus, the 214-residue chain is Large ribosomal subunit protein uL16 (214 aa).

Residue Arg-32 is modified to Citrulline. A Glycyl lysine isopeptide (Lys-Gly) (interchain with G-Cter in SUMO2) cross-link involves residue Lys-175. Lys-188 participates in a covalent cross-link: Glycyl lysine isopeptide (Lys-Gly) (interchain with G-Cter in ubiquitin).

It belongs to the universal ribosomal protein uL16 family. In terms of assembly, component of the large ribosomal subunit. Mature ribosomes consist of a small (40S) and a large (60S) subunit. The 40S subunit contains about 33 different proteins and 1 molecule of RNA (18S). The 60S subunit contains about 49 different proteins and 3 molecules of RNA (28S, 5.8S and 5S). Citrullinated by PADI4. Post-translationally, ufmylated by UFL1.

Its subcellular location is the cytoplasm. In terms of biological role, component of the large ribosomal subunit. Plays a role in the formation of actively translating ribosomes. May play a role in the embryonic brain development. In Pongo abelii (Sumatran orangutan), this protein is Large ribosomal subunit protein uL16.